A 139-amino-acid polypeptide reads, in one-letter code: Putative pre-16S rRNA nuclease (139 aa).

This sequence belongs to the YqgF nuclease family.

It is found in the cytoplasm. Could be a nuclease involved in processing of the 5'-end of pre-16S rRNA. This chain is Putative pre-16S rRNA nuclease, found in Streptococcus uberis (strain ATCC BAA-854 / 0140J).